Here is a 380-residue protein sequence, read N- to C-terminus: uncharacterized protein (380 aa).

This is an uncharacterized protein from Methanocaldococcus jannaschii (strain ATCC 43067 / DSM 2661 / JAL-1 / JCM 10045 / NBRC 100440) (Methanococcus jannaschii).